A 109-amino-acid polypeptide reads, in one-letter code: Aquaporin-2 (109 aa).

Topologically, residues 1–6 are cytoplasmic; the sequence is SIAFSK. Residues 7 to 27 traverse the membrane as a helical segment; the sequence is AVFSEFLATLLFVFFGLGSAL. Topologically, residues 28–35 are extracellular; the sequence is NWPQALPS. A helical transmembrane segment spans residues 36-54; it reads GLQIAMAFGLAIGTLVQTL. Residues 55 to 59 are Cytoplasmic-facing; that stretch reads GHISG. An intramembrane region (discontinuously helical) is located at residues 60–69; that stretch reads AHINPAVTVA. The NPA 1 signature appears at 63–65; it reads NPA. Residues 70 to 80 lie on the Cytoplasmic side of the membrane; the sequence is CLVGCHVSFLR. The chain crosses the membrane as a helical span at residues 81–102; sequence AIFYVAAQLLGAVAGAALLHEL. Residues 103 to 109 lie on the Extracellular side of the membrane; sequence TPPDIRG.

Belongs to the MIP/aquaporin (TC 1.A.8) family. As to quaternary structure, homotetramer. Post-translationally, serine phosphorylation is necessary and sufficient for expression at the apical membrane. Endocytosis is not phosphorylation-dependent. In terms of processing, N-glycosylated.

It localises to the apical cell membrane. The protein localises to the basolateral cell membrane. It is found in the cell membrane. The protein resides in the cytoplasmic vesicle membrane. Its subcellular location is the golgi apparatus. It localises to the trans-Golgi network membrane. The catalysed reaction is H2O(in) = H2O(out). The enzyme catalyses glycerol(in) = glycerol(out). In terms of biological role, forms a water-specific channel that provides the plasma membranes of renal collecting duct with high permeability to water, thereby permitting water to move in the direction of an osmotic gradient. Plays an essential role in renal water homeostasis. Could also be permeable to glycerol. In Orycteropus afer (Aardvark), this protein is Aquaporin-2.